We begin with the raw amino-acid sequence, 211 residues long: uncharacterized protein (211 aa).

3 helical membrane-spanning segments follow: residues 22-42 (FINF…GLKV), 111-131 (IIGA…WFPV), and 133-153 (GMAG…FMIT).

To E.coli YkgB. This sequence to H.influenzae HI_0219.

The protein localises to the cell membrane. This is an uncharacterized protein from Mannheimia haemolytica (Pasteurella haemolytica).